Consider the following 115-residue polypeptide: Nucleoid-associated protein PMN2A_1347 (115 aa).

Positions 89–115 (STSTMKERMEDLTGGFKLNLPGMGEEN) are disordered.

This sequence belongs to the YbaB/EbfC family. As to quaternary structure, homodimer.

The protein resides in the cytoplasm. It localises to the nucleoid. In terms of biological role, binds to DNA and alters its conformation. May be involved in regulation of gene expression, nucleoid organization and DNA protection. The polypeptide is Nucleoid-associated protein PMN2A_1347 (Prochlorococcus marinus (strain NATL2A)).